The sequence spans 376 residues: Putative glutamate--cysteine ligase 2-1 (376 aa).

The protein belongs to the glutamate--cysteine ligase type 2 family. YbdK subfamily.

The enzyme catalyses L-cysteine + L-glutamate + ATP = gamma-L-glutamyl-L-cysteine + ADP + phosphate + H(+). Its function is as follows. ATP-dependent carboxylate-amine ligase which exhibits weak glutamate--cysteine ligase activity. In Mycobacterium sp. (strain JLS), this protein is Putative glutamate--cysteine ligase 2-1.